Reading from the N-terminus, the 301-residue chain is Rhodopsin (301 aa).

Topologically, residues 1-18 are extracellular; sequence LHMIHLHWYQYPPMNPMM. A helical transmembrane segment spans residues 19–43; that stretch reads YPLLLIFMLFTGILCLAGNFVTIWV. At 44–55 the chain is on the cytoplasmic side; sequence FMNTKSLRTPAN. Residues 56–78 traverse the membrane as a helical segment; the sequence is LLVVNLAMSDFLMMFTMFPPMMV. Topologically, residues 79-92 are extracellular; that stretch reads TCYYHTWTLGPTFC. Cysteine 92 and cysteine 169 are oxidised to a cystine. Residues 93–115 form a helical membrane-spanning segment; it reads QVYAFLGNLCGCASIWTMVFITF. A 'Ionic lock' involved in activated form stabilization motif is present at residues 116–118; sequence DRY. At 116-134 the chain is on the cytoplasmic side; that stretch reads DRYNVIVKGVAGEPLSTKK. The helical transmembrane segment at 135–155 threads the bilayer; the sequence is ASLWILSVWVLSTAWCIAPFF. Residues 156–182 lie on the Extracellular side of the membrane; that stretch reads GWNHYVPEGNLTGCGTDYLSEDILSRS. Residue asparagine 165 is glycosylated (N-linked (GlcNAc...) asparagine). The helical transmembrane segment at 183–204 threads the bilayer; it reads YLYIYSTWVYFLPLAITIYCYV. Residues 205-245 are Cytoplasmic-facing; it reads FIIKAVAAHEKGMRDQAKKMGIKSLRNEEAQKTSAECRLAK. The helical transmembrane segment at 246-267 threads the bilayer; sequence NAMTTVALWFIAWTPCLLINWV. The Extracellular portion of the chain corresponds to 268–278; the sequence is GMFARSYLSPV. A helical membrane pass occupies residues 279–300; sequence YTIWGYVFAKANAVYNPIVYAI. At lysine 288 the chain carries N6-(retinylidene)lysine.

It belongs to the G-protein coupled receptor 1 family. Opsin subfamily. As to quaternary structure, homodimer. Interacts with GNAQ. Post-translationally, contains one covalently linked retinal chromophore.

The protein resides in the cell projection. The protein localises to the rhabdomere membrane. Its function is as follows. Photoreceptor required for image-forming vision at low light intensity. Can use both retinal and 3-dehydroretinal as visual pigment. Light-induced isomerization of 11-cis to all-trans retinal triggers a conformational change that activates signaling via G-proteins. Signaling via GNAQ probably mediates the activation of phospholipase C. The protein is Rhodopsin (RHO) of Cambarus hubrichti (Salem cave crayfish).